A 273-amino-acid chain; its full sequence is NAD-dependent protein deacylase (273 aa).

One can recognise a Deacetylase sirtuin-type domain in the interval 20 to 272; it reads RERLRQRIFF…PEFVEKLLEG (253 aa). 48–67 contributes to the NAD(+) binding site; it reads GAGISAESGIRTFRAADGLW. 2 residues coordinate substrate: Y92 and R95. Residue 129–132 coordinates NAD(+); it reads QNID. H147 serves as the catalytic Proton acceptor. Zn(2+) is bound by residues C155 and C174. NAD(+) is bound by residues 214-216, 240-242, and A258; these read GTS and NLE.

This sequence belongs to the sirtuin family. Class III subfamily. It depends on Zn(2+) as a cofactor.

It localises to the cytoplasm. The enzyme catalyses N(6)-acetyl-L-lysyl-[protein] + NAD(+) + H2O = 2''-O-acetyl-ADP-D-ribose + nicotinamide + L-lysyl-[protein]. It carries out the reaction N(6)-succinyl-L-lysyl-[protein] + NAD(+) + H2O = 2''-O-succinyl-ADP-D-ribose + nicotinamide + L-lysyl-[protein]. It catalyses the reaction N(6)-(2-hydroxyisobutanoyl)-L-lysyl-[protein] + NAD(+) + H2O = 2''-O-(2-hydroxyisobutanoyl)-ADP-D-ribose + nicotinamide + L-lysyl-[protein]. Its function is as follows. NAD-dependent lysine deacetylase that specifically removes acetyl groups on target proteins. Also acts as a protein-lysine deacylase by mediating protein desuccinylation and de-2-hydroxyisobutyrylation. Modulates the activities of several proteins which are inactive in their acylated form. The chain is NAD-dependent protein deacylase from Shigella flexneri.